The following is a 364-amino-acid chain: Carbamoyl phosphate synthase small chain (364 aa).

CPSase stretches follow at residues 1 to 167 (MKRQ…PSPG) and 1 to 171 (MKRQ…RGER). Residues Ser45, Gly219, and Gly221 each coordinate L-glutamine. The Glutamine amidotransferase type-1 domain maps to 171–358 (RIVLIDFGMK…LALIREFNKK (188 aa)). Cys246 acts as the Nucleophile in catalysis. L-glutamine is bound by residues Leu247, Gln250, Asn288, Gly290, and Tyr291. Catalysis depends on residues His331 and Glu333.

Belongs to the CarA family. In terms of assembly, composed of two chains; the small (or glutamine) chain promotes the hydrolysis of glutamine to ammonia, which is used by the large (or ammonia) chain to synthesize carbamoyl phosphate. Tetramer of heterodimers (alpha,beta)4.

The catalysed reaction is hydrogencarbonate + L-glutamine + 2 ATP + H2O = carbamoyl phosphate + L-glutamate + 2 ADP + phosphate + 2 H(+). It carries out the reaction L-glutamine + H2O = L-glutamate + NH4(+). Its pathway is amino-acid biosynthesis; L-arginine biosynthesis; carbamoyl phosphate from bicarbonate: step 1/1. It functions in the pathway pyrimidine metabolism; UMP biosynthesis via de novo pathway; (S)-dihydroorotate from bicarbonate: step 1/3. In terms of biological role, small subunit of the glutamine-dependent carbamoyl phosphate synthetase (CPSase). CPSase catalyzes the formation of carbamoyl phosphate from the ammonia moiety of glutamine, carbonate, and phosphate donated by ATP, constituting the first step of 2 biosynthetic pathways, one leading to arginine and/or urea and the other to pyrimidine nucleotides. The small subunit (glutamine amidotransferase) binds and cleaves glutamine to supply the large subunit with the substrate ammonia. This chain is Carbamoyl phosphate synthase small chain, found in Bacillus caldolyticus.